The chain runs to 101 residues: Large ribosomal subunit protein bL21 (101 aa).

The protein belongs to the bacterial ribosomal protein bL21 family. In terms of assembly, part of the 50S ribosomal subunit. Contacts protein L20.

This protein binds to 23S rRNA in the presence of protein L20. The protein is Large ribosomal subunit protein bL21 of Corynebacterium diphtheriae (strain ATCC 700971 / NCTC 13129 / Biotype gravis).